We begin with the raw amino-acid sequence, 379 residues long: Queuine tRNA-ribosyltransferase (379 aa).

Residue aspartate 94 is the Proton acceptor of the active site. Substrate is bound by residues 94–98, aspartate 148, glutamine 191, and glycine 218; that span reads DSGGF. Residues 249 to 255 form an RNA binding region; the sequence is GVGSPDA. The active-site Nucleophile is aspartate 268. Residues 273-277 form an RNA binding; important for wobble base 34 recognition region; it reads TRIAR. Cysteine 306, cysteine 308, cysteine 311, and histidine 337 together coordinate Zn(2+).

This sequence belongs to the queuine tRNA-ribosyltransferase family. Homodimer. Within each dimer, one monomer is responsible for RNA recognition and catalysis, while the other monomer binds to the replacement base PreQ1. Zn(2+) is required as a cofactor.

The enzyme catalyses 7-aminomethyl-7-carbaguanine + guanosine(34) in tRNA = 7-aminomethyl-7-carbaguanosine(34) in tRNA + guanine. It functions in the pathway tRNA modification; tRNA-queuosine biosynthesis. Functionally, catalyzes the base-exchange of a guanine (G) residue with the queuine precursor 7-aminomethyl-7-deazaguanine (PreQ1) at position 34 (anticodon wobble position) in tRNAs with GU(N) anticodons (tRNA-Asp, -Asn, -His and -Tyr). Catalysis occurs through a double-displacement mechanism. The nucleophile active site attacks the C1' of nucleotide 34 to detach the guanine base from the RNA, forming a covalent enzyme-RNA intermediate. The proton acceptor active site deprotonates the incoming PreQ1, allowing a nucleophilic attack on the C1' of the ribose to form the product. After dissociation, two additional enzymatic reactions on the tRNA convert PreQ1 to queuine (Q), resulting in the hypermodified nucleoside queuosine (7-(((4,5-cis-dihydroxy-2-cyclopenten-1-yl)amino)methyl)-7-deazaguanosine). This Staphylococcus haemolyticus (strain JCSC1435) protein is Queuine tRNA-ribosyltransferase.